A 1057-amino-acid polypeptide reads, in one-letter code: Carbamoyl phosphate synthase large chain (1057 aa).

The interval M1–E401 is carboxyphosphate synthetic domain. Residues R129, R169, G175, G176, K208, I210, E215, G241, I242, H243, Q284, and E298 each coordinate ATP. The region spanning R133–V327 is the ATP-grasp 1 domain. Mg(2+) is bound by residues Q284, E298, and N300. Positions 284, 298, and 300 each coordinate Mn(2+). The tract at residues Y402–S546 is oligomerization domain. The tract at residues I547–G929 is carbamoyl phosphate synthetic domain. The 191-residue stretch at E671–M861 folds into the ATP-grasp 2 domain. 10 residues coordinate ATP: R707, R746, L748, E752, G777, V778, H779, S780, Q820, and E832. Mg(2+) contacts are provided by Q820, E832, and N834. Mn(2+)-binding residues include Q820, E832, and N834. Residues F930–V1057 form the MGS-like domain. Positions F930 to V1057 are allosteric domain.

Belongs to the CarB family. Composed of two chains; the small (or glutamine) chain promotes the hydrolysis of glutamine to ammonia, which is used by the large (or ammonia) chain to synthesize carbamoyl phosphate. Tetramer of heterodimers (alpha,beta)4. Requires Mg(2+) as cofactor. Mn(2+) is required as a cofactor.

The enzyme catalyses hydrogencarbonate + L-glutamine + 2 ATP + H2O = carbamoyl phosphate + L-glutamate + 2 ADP + phosphate + 2 H(+). The catalysed reaction is hydrogencarbonate + NH4(+) + 2 ATP = carbamoyl phosphate + 2 ADP + phosphate + 2 H(+). It functions in the pathway amino-acid biosynthesis; L-arginine biosynthesis; carbamoyl phosphate from bicarbonate: step 1/1. Its pathway is pyrimidine metabolism; UMP biosynthesis via de novo pathway; (S)-dihydroorotate from bicarbonate: step 1/3. Functionally, large subunit of the glutamine-dependent carbamoyl phosphate synthetase (CPSase). CPSase catalyzes the formation of carbamoyl phosphate from the ammonia moiety of glutamine, carbonate, and phosphate donated by ATP, constituting the first step of 2 biosynthetic pathways, one leading to arginine and/or urea and the other to pyrimidine nucleotides. The large subunit (synthetase) binds the substrates ammonia (free or transferred from glutamine from the small subunit), hydrogencarbonate and ATP and carries out an ATP-coupled ligase reaction, activating hydrogencarbonate by forming carboxy phosphate which reacts with ammonia to form carbamoyl phosphate. This Staphylococcus epidermidis (strain ATCC 12228 / FDA PCI 1200) protein is Carbamoyl phosphate synthase large chain.